The following is a 370-amino-acid chain: Early nodulin-like protein 1 (370 aa).

A signal peptide spans 1–27 (MSAIMKSLCFSFLILASFATFFSVADA). In terms of domain architecture, Phytocyanin spans 28-129 (WRFNVGGNGA…GQKLIVVVLA (102 aa)). Asn58 carries an N-linked (GlcNAc...) asparagine glycan. The cysteines at positions 83 and 117 are disulfide-linked. A compositionally biased stretch (low complexity) spans 135–175 (SAPAHSPVPSVSPTQPPKSHSPVSPVAPASAPSKSQPPRSS). The disordered stretch occupies residues 135-347 (SAPAHSPVPS…PAPSPRTNSA (213 aa)). Positions 176 to 194 (VSPAQPPKSSSPISHTPAL) are enriched in polar residues. Composition is skewed to low complexity over residues 195–205 (SPSHATSHSPA) and 215–290 (SPVS…QSPA). The span at 291–305 (TPSPMTPQSPSPVSS) shows a compositional bias: pro residues. Positions 306-318 (PSPDQSAAPSDQS) are enriched in low complexity. A compositionally biased stretch (polar residues) spans 319 to 334 (TPLAPSPSETTPTADN). The N-linked (GlcNAc...) asparagine glycan is linked to Asn334. Asn345 carries GPI-anchor amidated asparagine lipidation. Positions 346–370 (SASGLAVTSVMSTLFSATFTFLMFA) are cleaved as a propeptide — removed in mature form.

The protein belongs to the early nodulin-like (ENODL) family. Mostly expressed in stems, leaves and flowers, and, to a lower extent, in seedlings, roots and seeds.

Its subcellular location is the cell membrane. In terms of biological role, may act as a carbohydrate transporter. The polypeptide is Early nodulin-like protein 1 (Arabidopsis thaliana (Mouse-ear cress)).